A 122-amino-acid chain; its full sequence is Large ribosomal subunit protein uL14 (122 aa).

It belongs to the universal ribosomal protein uL14 family. In terms of assembly, part of the 50S ribosomal subunit. Forms a cluster with proteins L3 and L19. In the 70S ribosome, L14 and L19 interact and together make contacts with the 16S rRNA in bridges B5 and B8.

Its function is as follows. Binds to 23S rRNA. Forms part of two intersubunit bridges in the 70S ribosome. This Stenotrophomonas maltophilia (strain R551-3) protein is Large ribosomal subunit protein uL14.